A 634-amino-acid polypeptide reads, in one-letter code: Ankyrin repeat protein OPG025 (634 aa).

6 ANK repeats span residues 36-69 (DGET…YKNI), 70-100 (NDFD…EINS), 103-134 (NGIN…PTCS), 175-211 (MGKT…EMRY), 307-337 (IQDL…TLYR), and 412-441 (HGCS…DINI).

It belongs to the orthopoxvirus OPG025 family. In terms of assembly, interacts with components of host SCF complex CUL1 and SKP1 and components of the cullin deneddylation/COP9 signalosome complex subunits COPS7A and COPS7B.

Plays a role in the inhibition of host immune repsonse by counteracting the action of interferons on early events in the viral replication cycle. The polypeptide is Ankyrin repeat protein OPG025 (OPG025) (Vaccinia virus (strain Copenhagen) (VACV)).